Consider the following 84-residue polypeptide: Delta-stichotoxin-Shd3a (84 aa).

An N-terminal signal peptide occupies residues 1-19 (MAYLKIVLVALMLVLGVSA). Residues 20–33 (MRLSDQEDQDVSVV) constitute a propeptide that is removed on maturation. Disulfide bonds link C38–C78, C40–C68, and C61–C79. The residue at position 83 (K83) is a Lysine amide.

It belongs to the sea anemone sodium channel inhibitory toxin family. Type II subfamily.

The protein resides in the secreted. It localises to the nematocyst. Functionally, binds specifically to voltage-gated sodium channels (Nav), thereby delaying their inactivation during signal transduction. The polypeptide is Delta-stichotoxin-Shd3a (Stichodactyla haddoni (Saddle carpet anemone)).